Reading from the N-terminus, the 479-residue chain is Cobyric acid synthase (479 aa).

The GATase cobBQ-type domain occupies 250–442; the sequence is TRTVAVVAYP…LHGLFEDAAA (193 aa). Catalysis depends on C331, which acts as the Nucleophile. H434 is an active-site residue.

The protein belongs to the CobB/CobQ family. CobQ subfamily.

It functions in the pathway cofactor biosynthesis; adenosylcobalamin biosynthesis. In terms of biological role, catalyzes amidations at positions B, D, E, and G on adenosylcobyrinic A,C-diamide. NH(2) groups are provided by glutamine, and one molecule of ATP is hydrogenolyzed for each amidation. In Variovorax paradoxus (strain S110), this protein is Cobyric acid synthase.